Here is a 28-residue protein sequence, read N- to C-terminus: Apolipoprotein C-I (28 aa).

The protein belongs to the apolipoprotein C1 family.

The protein resides in the secreted. Inhibitor of lipoprotein binding to the low density lipoprotein (LDL) receptor, LDL receptor-related protein, and very low density lipoprotein (VLDL) receptor. Associates with high density lipoproteins (HDL) and the triacylglycerol-rich lipoproteins in the plasma and makes up about 10% of the protein of the VLDL and 2% of that of HDL. Appears to interfere directly with fatty acid uptake and is also the major plasma inhibitor of cholesteryl ester transfer protein (CETP). Binds free fatty acids and reduces their intracellular esterification. Modulates the interaction of APOE with beta-migrating VLDL and inhibits binding of beta-VLDL to the LDL receptor-related protein. The sequence is that of Apolipoprotein C-I (APOC1) from Oryctolagus cuniculus (Rabbit).